The chain runs to 358 residues: Peptide chain release factor 1 (358 aa).

At Gln233 the chain carries N5-methylglutamine.

Belongs to the prokaryotic/mitochondrial release factor family. Post-translationally, methylated by PrmC. Methylation increases the termination efficiency of RF1.

The protein resides in the cytoplasm. In terms of biological role, peptide chain release factor 1 directs the termination of translation in response to the peptide chain termination codons UAG and UAA. The protein is Peptide chain release factor 1 of Geobacillus sp. (strain WCH70).